A 787-amino-acid polypeptide reads, in one-letter code: Lysine-specific demethylase JMJ13 (787 aa).

One can recognise a JmjN domain in the interval 103-144; it reads CPVYRPTKEEFEDPLTYLQKIFPEASKYGICKIVSPLTATVP. The 171-residue stretch at 250–420 folds into the JmjC domain; the sequence is SSKWNLNKVS…FGAIASCRYA (171 aa). Residues H293, E295, and H388 each contribute to the Fe cation site. 8 residues coordinate Zn(2+): C500, C503, C514, C516, H519, C522, H525, and C534. The segment at 500–551 adopts a C4HCHC zinc-finger fold; sequence CSLCKRDCYLAFINCECYSHPVCLRHDVKKLDLPCGTTHTLYLRDNIEDMEA. A C5HC2 zinc finger spans residues 500-551; that stretch reads CSLCKRDCYLAFINCECYSHPVCLRHDVKKLDLPCGTTHTLYLRDNIEDMEA. The FYR N-terminal domain occupies 617–675; that stretch reads VMSYEANASCISSVADDYECSDYVNRRANCSSSSDSKLSEEVACSSSKKTRFFPVVQDE. The 80-residue stretch at 677-756 folds into the FYR C-terminal domain; sequence LVADQESDGS…ELVISNRKET (80 aa). Residues 712-769 form a disordered region; the sequence is ESDHHQELKRLKKSHHHEGRYSSSSSVSRQEEEEDELVISNRKETQQQSDVKMQKKRI. The short motif at 752–759 is the Nuclear localization signal element; it reads NRKETQQQ.

It belongs to the JARID1 histone demethylase family. The cofactor is Fe(2+). As to expression, mostly expressed in leaves, and, to a lower extent, in inflorescences, roots, siliques and stems.

The protein localises to the nucleus. The enzyme catalyses N(6),N(6),N(6)-trimethyl-L-lysyl(27)-[histone H3] + 2-oxoglutarate + O2 = N(6),N(6)-dimethyl-L-lysyl(27)-[histone H3] + formaldehyde + succinate + CO2. Functionally, histone demethylase that demethylates 'Lys-27' (H3K27me) of histone H3 with a specific activity for H3K27me3 and involved in the regulation of gene expression. Acts as a temperature and photoperiod dependent flowering repressor. The chain is Lysine-specific demethylase JMJ13 from Arabidopsis thaliana (Mouse-ear cress).